The following is a 179-amino-acid chain: Large ribosomal subunit protein uL5 (179 aa).

This sequence belongs to the universal ribosomal protein uL5 family. In terms of assembly, part of the 50S ribosomal subunit; part of the 5S rRNA/L5/L18/L25 subcomplex. Contacts the 5S rRNA and the P site tRNA. Forms a bridge to the 30S subunit in the 70S ribosome.

Its function is as follows. This is one of the proteins that bind and probably mediate the attachment of the 5S RNA into the large ribosomal subunit, where it forms part of the central protuberance. In the 70S ribosome it contacts protein S13 of the 30S subunit (bridge B1b), connecting the 2 subunits; this bridge is implicated in subunit movement. Contacts the P site tRNA; the 5S rRNA and some of its associated proteins might help stabilize positioning of ribosome-bound tRNAs. This chain is Large ribosomal subunit protein uL5, found in Pseudomonas putida (strain W619).